A 358-amino-acid polypeptide reads, in one-letter code: Alanine racemase (358 aa).

Residue Lys35 is the Proton acceptor; specific for D-alanine of the active site. Position 35 is an N6-(pyridoxal phosphate)lysine (Lys35). Residue Arg130 participates in substrate binding. The active-site Proton acceptor; specific for L-alanine is Tyr255. Position 303 (Met303) interacts with substrate.

The protein belongs to the alanine racemase family. Pyridoxal 5'-phosphate is required as a cofactor.

It catalyses the reaction L-alanine = D-alanine. Its pathway is amino-acid biosynthesis; D-alanine biosynthesis; D-alanine from L-alanine: step 1/1. In terms of biological role, catalyzes the interconversion of L-alanine and D-alanine. May also act on other amino acids. The polypeptide is Alanine racemase (alr) (Shewanella sediminis (strain HAW-EB3)).